The primary structure comprises 566 residues: CTP synthase (566 aa).

Positions 1-265 are amidoligase domain; it reads MTKYVFVTGG…DEIVCHKLNL (265 aa). Serine 13 lines the CTP pocket. Serine 13 contacts UTP. ATP is bound by residues 14–19 and aspartate 71; that span reads SLGKGI. Mg(2+) is bound by residues aspartate 71 and glutamate 139. CTP-binding positions include 146–148, 186–191, and lysine 222; these read DIE and KTKPTQ. UTP is bound by residues 186-191 and lysine 222; that span reads KTKPTQ. Residues 290-543 enclose the Glutamine amidotransferase type-1 domain; it reads EIALVGKYVD…IEAAAVFADK (254 aa). Glycine 351 provides a ligand contact to L-glutamine. Residue cysteine 378 is the Nucleophile; for glutamine hydrolysis of the active site. L-glutamine contacts are provided by residues 379–382, glutamate 402, and arginine 469; that span reads LGMQ. Residues histidine 516 and glutamate 518 contribute to the active site. The tract at residues 545-566 is disordered; it reads PSSEGAISADKPERTTTGAYIQ.

The protein belongs to the CTP synthase family. Homotetramer.

It catalyses the reaction UTP + L-glutamine + ATP + H2O = CTP + L-glutamate + ADP + phosphate + 2 H(+). The catalysed reaction is L-glutamine + H2O = L-glutamate + NH4(+). It carries out the reaction UTP + NH4(+) + ATP = CTP + ADP + phosphate + 2 H(+). Its pathway is pyrimidine metabolism; CTP biosynthesis via de novo pathway; CTP from UDP: step 2/2. Allosterically activated by GTP, when glutamine is the substrate; GTP has no effect on the reaction when ammonia is the substrate. The allosteric effector GTP functions by stabilizing the protein conformation that binds the tetrahedral intermediate(s) formed during glutamine hydrolysis. Inhibited by the product CTP, via allosteric rather than competitive inhibition. Catalyzes the ATP-dependent amination of UTP to CTP with either L-glutamine or ammonia as the source of nitrogen. Regulates intracellular CTP levels through interactions with the four ribonucleotide triphosphates. The chain is CTP synthase from Nitrosospira multiformis (strain ATCC 25196 / NCIMB 11849 / C 71).